A 20-amino-acid polypeptide reads, in one-letter code: C-reactive protein (20 aa).

In terms of domain architecture, Pentraxin (PTX) spans 1–20; sequence SPVAASYRATAGLAGKALDF.

The protein belongs to the pentraxin family. In terms of assembly, homodimer; disulfide-linked. It is not known if it assembles into a pentraxin (or pentaxin) structure. Pentraxins have a discoid arrangement of 5 non-covalently bound subunits. Post-translationally, glycosylated.

The protein localises to the secreted. Its function is as follows. Displays several functions associated with host defense: it promotes agglutination, bacterial capsular swelling, phagocytosis, and complement fixation through its calcium-dependent binding to phosphorylcholine. This is C-reactive protein from Mustelus canis (Smooth dogfish).